We begin with the raw amino-acid sequence, 102 residues long: MEITDVRLRRVETDGRMKAISSITIDGEFVIHDIRVIDGNEGLFVAMPSKRTPDGEFRDIAHPINSGTRAKIQEAVLAAYEVADEPAVNEESSADESVVEEN.

It belongs to the SpoVG family.

Its function is as follows. Could be involved in septation. The chain is Putative septation protein SpoVG 1 from Listeria innocua serovar 6a (strain ATCC BAA-680 / CLIP 11262).